A 237-amino-acid polypeptide reads, in one-letter code: Synapse differentiation-inducing gene protein 1-like (237 aa).

Disordered regions lie at residues 1–23 (MESLSELQNPLLPRSPTHLHRPY), 84–111 (AGSCETSFTEAREPLAGPAEEGSEPGQA), and 127–148 (ELQGQEDSQEEESDGTSSESEC). Topologically, residues 1 to 161 (MESLSELQNP…FLTLPPRDHL (161 aa)) are extracellular. Positions 129 to 148 (QGQEDSQEEESDGTSSESEC) are enriched in acidic residues. Residues 162-182 (GLTLFSMLCCFWPLGIAAFYF) form a helical membrane-spanning segment. The Cytoplasmic portion of the chain corresponds to 183–204 (SQGTSKAISKGDFRLASTTSRR). Residues 205-225 (ALFLATLSIAVGAGLYVAVVV) traverse the membrane as a helical segment. Residues 226-237 (ALAAYMSQNGHG) are Extracellular-facing.

Belongs to the CD225/Dispanin family. In terms of tissue distribution, expression is restricted to the caudate-putamen. Down-regulated in R6/2 transgenic mice, a model for Huntington disease.

The protein localises to the membrane. Its subcellular location is the golgi apparatus. It localises to the cis-Golgi network. In Mus musculus (Mouse), this protein is Synapse differentiation-inducing gene protein 1-like (Syndig1l).